We begin with the raw amino-acid sequence, 620 residues long: Notoamide biosynthesis transcriptional activator notL' (620 aa).

The tract at residues 1 to 26 (MPPSSKSRRLPPAASDSAASDAQKRR) is disordered. The zn(2)-C6 fungal-type DNA-binding region spans 33–59 (CSACKARKLKCTGAPPCANCVKSRIEC). Positions 591–620 (ETGAFFLDPDQPSGNSTPIKSETPEGTAIS) are disordered.

The protein resides in the nucleus. Transcription factor that probably regulates the expression of the gene cluster that mediates the biosynthesis of notoamide, a fungal indole alkaloid that belongs to a family of natural products containing a characteristic bicyclo[2.2.2]diazaoctane core. The sequence is that of Notoamide biosynthesis transcriptional activator notL' from Aspergillus versicolor.